Reading from the N-terminus, the 493-residue chain is Glutamate--tRNA ligase (493 aa).

A 'HIGH' region motif is present at residues 10 to 20 (PSPTGDPHVGT). The short motif at 251–255 (KLSKR) is the 'KMSKS' region element. Residue Lys-254 participates in ATP binding.

This sequence belongs to the class-I aminoacyl-tRNA synthetase family. Glutamate--tRNA ligase type 1 subfamily. Monomer.

It is found in the cytoplasm. It carries out the reaction tRNA(Glu) + L-glutamate + ATP = L-glutamyl-tRNA(Glu) + AMP + diphosphate. Its function is as follows. Catalyzes the attachment of glutamate to tRNA(Glu) in a two-step reaction: glutamate is first activated by ATP to form Glu-AMP and then transferred to the acceptor end of tRNA(Glu). This Pseudomonas entomophila (strain L48) protein is Glutamate--tRNA ligase.